The sequence spans 582 residues: Methionine--tRNA ligase (582 aa).

Positions 24–34 (PYIYAVPHLGN) match the 'HIGH' region motif. The Zn(2+) site is built by Cys-156, Cys-159, Cys-169, and Cys-172. Positions 346–350 (KFSKS) match the 'KMSKS' region motif. Lys-349 contacts ATP.

Belongs to the class-I aminoacyl-tRNA synthetase family. MetG type 1 subfamily. Zn(2+) serves as cofactor.

The protein resides in the cytoplasm. It carries out the reaction tRNA(Met) + L-methionine + ATP = L-methionyl-tRNA(Met) + AMP + diphosphate. Functionally, is required not only for elongation of protein synthesis but also for the initiation of all mRNA translation through initiator tRNA(fMet) aminoacylation. The protein is Methionine--tRNA ligase of Caldivirga maquilingensis (strain ATCC 700844 / DSM 13496 / JCM 10307 / IC-167).